The following is a 782-amino-acid chain: Endonuclease MutS2 (782 aa).

Glycine 336–threonine 343 is a binding site for ATP. The Smr domain occupies leucine 707–lysine 782.

Belongs to the DNA mismatch repair MutS family. MutS2 subfamily. In terms of assembly, homodimer. Binds to stalled ribosomes, contacting rRNA.

Functionally, endonuclease that is involved in the suppression of homologous recombination and thus may have a key role in the control of bacterial genetic diversity. Acts as a ribosome collision sensor, splitting the ribosome into its 2 subunits. Detects stalled/collided 70S ribosomes which it binds and splits by an ATP-hydrolysis driven conformational change. Acts upstream of the ribosome quality control system (RQC), a ribosome-associated complex that mediates the extraction of incompletely synthesized nascent chains from stalled ribosomes and their subsequent degradation. Probably generates substrates for RQC. This Staphylococcus aureus (strain MRSA252) protein is Endonuclease MutS2.